The chain runs to 463 residues: Ribosomal protein uS12 methylthiotransferase RimO (463 aa).

The MTTase N-terminal domain maps to 15-130 (PKVGMVSLGC…VMQVVHSHLP (116 aa)). Cys-24, Cys-60, Cys-89, Cys-161, Cys-165, and Cys-168 together coordinate [4Fe-4S] cluster. The Radical SAM core domain occupies 147-392 (LTPRHYAYLK…MEVAEEVSAA (246 aa)). In terms of domain architecture, TRAM spans 395–463 (ERKVGKTLKV…ADGHDLWGEV (69 aa)).

This sequence belongs to the methylthiotransferase family. RimO subfamily. It depends on [4Fe-4S] cluster as a cofactor.

It is found in the cytoplasm. The enzyme catalyses L-aspartate(89)-[ribosomal protein uS12]-hydrogen + (sulfur carrier)-SH + AH2 + 2 S-adenosyl-L-methionine = 3-methylsulfanyl-L-aspartate(89)-[ribosomal protein uS12]-hydrogen + (sulfur carrier)-H + 5'-deoxyadenosine + L-methionine + A + S-adenosyl-L-homocysteine + 2 H(+). Catalyzes the methylthiolation of an aspartic acid residue of ribosomal protein uS12. This Burkholderia thailandensis (strain ATCC 700388 / DSM 13276 / CCUG 48851 / CIP 106301 / E264) protein is Ribosomal protein uS12 methylthiotransferase RimO.